The following is a 356-amino-acid chain: Heme A synthase (356 aa).

Helical transmembrane passes span 23-43 (IAIW…VGGV), 105-125 (FHRL…LYFL), 141-161 (IFLL…SGLV), 173-193 (AHLG…LDLL), and 212-232 (STML…VAGI). Position 274 (histidine 274) interacts with heme. The next 3 helical transmembrane spans lie at 276-296 (LIAW…RAVP), 307-327 (LLLI…LLVV), and 329-349 (LTLA…ALWV). Heme is bound at residue histidine 335.

The protein belongs to the COX15/CtaA family. Type 2 subfamily. As to quaternary structure, interacts with CtaB. The cofactor is heme b.

It is found in the cell membrane. It catalyses the reaction Fe(II)-heme o + 2 A + H2O = Fe(II)-heme a + 2 AH2. The protein operates within porphyrin-containing compound metabolism; heme A biosynthesis; heme A from heme O: step 1/1. Catalyzes the conversion of heme O to heme A by two successive hydroxylations of the methyl group at C8. The first hydroxylation forms heme I, the second hydroxylation results in an unstable dihydroxymethyl group, which spontaneously dehydrates, resulting in the formyl group of heme A. This Nitrosospira multiformis (strain ATCC 25196 / NCIMB 11849 / C 71) protein is Heme A synthase.